Here is a 308-residue protein sequence, read N- to C-terminus: Spermidine synthase 2 (308 aa).

The region spanning P17–T254 is the PABS domain. Q48 provides a ligand contact to S-adenosyl 3-(methylsulfanyl)propylamine. Residue Y78 participates in putrescine binding. Residues Q79, D103, E123, D154–G155, and D173 each bind S-adenosyl 3-(methylsulfanyl)propylamine. The active-site Proton acceptor is D173. Putrescine-binding positions include D173 to D176 and Y242.

The protein belongs to the spermidine/spermine synthase family.

The enzyme catalyses S-adenosyl 3-(methylsulfanyl)propylamine + putrescine = S-methyl-5'-thioadenosine + spermidine + H(+). It functions in the pathway amine and polyamine biosynthesis; spermidine biosynthesis; spermidine from putrescine: step 1/1. The polypeptide is Spermidine synthase 2 (Hyoscyamus niger (Black henbane)).